A 186-amino-acid chain; its full sequence is TATA box-binding protein-like 1 (186 aa).

The protein belongs to the TBP family. As to expression, expressed ubiquitously with highest expression in the ovary and testis.

The protein resides in the cytoplasm. It is found in the nucleus. Part of a specialized transcription system that mediates the transcription of most ribosomal proteins through the 5'-TCT-3' motif which is a core promoter element at these genes. Seems to also mediate the transcription of NF1. Does not bind the TATA box. Members of the TBP family are differentially required to regulate transcription and development during early embryogenesis. Particularly regulates genes that have a role in catabolism. In Xenopus laevis (African clawed frog), this protein is TATA box-binding protein-like 1 (tbpl1).